The chain runs to 195 residues: Probable DNA-directed RNA polymerase subunit delta (195 aa).

Residues 14–81 (FALVEIATAI…GNNEWALRAW (68 aa)) form the HTH HARE-type domain. 2 stretches are compositionally biased toward acidic residues: residues 120–172 (DDDV…DESI) and 181–195 (GGDD…DQEK). The segment at 120–195 (DDDVIDYNDD…DDLSDGDQEK (76 aa)) is disordered.

The protein belongs to the RpoE family. RNAP is composed of a core of 2 alpha, a beta and a beta' subunits. The core is associated with a delta subunit and one of several sigma factors.

Participates in both the initiation and recycling phases of transcription. In the presence of the delta subunit, RNAP displays an increased specificity of transcription, a decreased affinity for nucleic acids, and an increased efficiency of RNA synthesis because of enhanced recycling. This chain is Probable DNA-directed RNA polymerase subunit delta, found in Leuconostoc mesenteroides subsp. mesenteroides (strain ATCC 8293 / DSM 20343 / BCRC 11652 / CCM 1803 / JCM 6124 / NCDO 523 / NBRC 100496 / NCIMB 8023 / NCTC 12954 / NRRL B-1118 / 37Y).